A 182-amino-acid polypeptide reads, in one-letter code: Large ribosomal subunit protein uL5 (182 aa).

It belongs to the universal ribosomal protein uL5 family. Part of the 50S ribosomal subunit; part of the 5S rRNA/L5/L18/L25 subcomplex. Contacts the 5S rRNA and the P site tRNA. Forms a bridge to the 30S subunit in the 70S ribosome.

In terms of biological role, this is one of the proteins that bind and probably mediate the attachment of the 5S RNA into the large ribosomal subunit, where it forms part of the central protuberance. In the 70S ribosome it contacts protein S13 of the 30S subunit (bridge B1b), connecting the 2 subunits; this bridge is implicated in subunit movement. Contacts the P site tRNA; the 5S rRNA and some of its associated proteins might help stabilize positioning of ribosome-bound tRNAs. The protein is Large ribosomal subunit protein uL5 of Borrelia turicatae (strain 91E135).